The primary structure comprises 252 residues: Chitooligosaccharide deacetylase (252 aa).

Positions 61 and 125 each coordinate Mg(2+).

This sequence belongs to the YdjC deacetylase family. ChbG subfamily. As to quaternary structure, homodimer. It depends on Mg(2+) as a cofactor.

The protein localises to the cytoplasm. The catalysed reaction is N,N'-diacetylchitobiose + H2O = N-acetyl-beta-D-glucosaminyl-(1-&gt;4)-D-glucosamine + acetate. It carries out the reaction diacetylchitobiose-6'-phosphate + H2O = N'-monoacetylchitobiose-6'-phosphate + acetate. The protein operates within glycan degradation; chitin degradation. Functionally, involved in the degradation of chitin. ChbG is essential for growth on the acetylated chitooligosaccharides chitobiose and chitotriose but is dispensable for growth on cellobiose and chitosan dimer, the deacetylated form of chitobiose. Deacetylation of chitobiose-6-P and chitotriose-6-P is necessary for both the activation of the chb promoter by the regulatory protein ChbR and the hydrolysis of phosphorylated beta-glucosides by the phospho-beta-glucosidase ChbF. Catalyzes the removal of only one acetyl group from chitobiose-6-P to yield monoacetylchitobiose-6-P, the inducer of ChbR and the substrate of ChbF. This chain is Chitooligosaccharide deacetylase, found in Escherichia coli O45:K1 (strain S88 / ExPEC).